The sequence spans 285 residues: NADPH-dependent 7-cyano-7-deazaguanine reductase (285 aa).

91–93 (IES) contacts substrate. 93–94 (SK) is an NADPH binding site. Cys-192 (thioimide intermediate) is an active-site residue. Residue Asp-199 is the Proton donor of the active site. 231–232 (HE) lines the substrate pocket. Residue 260–261 (RG) participates in NADPH binding.

It belongs to the GTP cyclohydrolase I family. QueF type 2 subfamily. In terms of assembly, homodimer.

It is found in the cytoplasm. It carries out the reaction 7-aminomethyl-7-carbaguanine + 2 NADP(+) = 7-cyano-7-deazaguanine + 2 NADPH + 3 H(+). It participates in tRNA modification; tRNA-queuosine biosynthesis. Catalyzes the NADPH-dependent reduction of 7-cyano-7-deazaguanine (preQ0) to 7-aminomethyl-7-deazaguanine (preQ1). In Psychromonas ingrahamii (strain DSM 17664 / CCUG 51855 / 37), this protein is NADPH-dependent 7-cyano-7-deazaguanine reductase.